The sequence spans 244 residues: MTATVEIRRAADRAVTTTSWLKSRHSFSFGDHYDPDNTHHGLLLVNNDDQMEPASGFDPHPHRDMEIVTWVLRGALRHQDSAGNSGVIYPGLAQRMSAGTGILHSEMNDSATEPVHFVQMWVIPDATGITASYQQQEIDDELLRAGLVTIASGIPGQDAALTLHNSSASLHGARLRPGATVSLPCAPFLHLFVAYGRLTLEGGGELADGDAVRFTDADARGLTANEPSEVLIWEMHAKLGDSAT.

4 residues coordinate a divalent metal cation: His-60, His-62, His-104, and Glu-106.

This sequence belongs to the pirin family. Requires a divalent metal cation as cofactor.

The enzyme catalyses quercetin + O2 = 2-(3,4-dihydroxybenzoyloxy)-4,6-dihydroxybenzoate + CO. The protein operates within flavonoid metabolism; quercetin degradation. Functionally, putative quercetin 2,3-dioxygenase. The sequence is that of Putative quercetin 2,3-dioxygenase Mb0187c from Mycobacterium bovis (strain ATCC BAA-935 / AF2122/97).